The sequence spans 635 residues: Biosynthetic arginine decarboxylase (635 aa).

Lys-100 is subject to N6-(pyridoxal phosphate)lysine. 282–292 provides a ligand contact to substrate; the sequence is IDIGGGLGVDY.

Belongs to the Orn/Lys/Arg decarboxylase class-II family. SpeA subfamily. The cofactor is Mg(2+). Pyridoxal 5'-phosphate serves as cofactor.

It carries out the reaction L-arginine + H(+) = agmatine + CO2. Its pathway is amine and polyamine biosynthesis; agmatine biosynthesis; agmatine from L-arginine: step 1/1. Its function is as follows. Catalyzes the biosynthesis of agmatine from arginine. This Pelobacter propionicus (strain DSM 2379 / NBRC 103807 / OttBd1) protein is Biosynthetic arginine decarboxylase.